The following is a 310-amino-acid chain: Cysteine synthase (310 aa).

K46 is subject to N6-(pyridoxal phosphate)lysine. Pyridoxal 5'-phosphate-binding positions include N76, G180–T184, and S268.

It belongs to the cysteine synthase/cystathionine beta-synthase family. In terms of assembly, homodimer. Pyridoxal 5'-phosphate serves as cofactor.

The enzyme catalyses O-acetyl-L-serine + hydrogen sulfide = L-cysteine + acetate. It participates in amino-acid biosynthesis; L-cysteine biosynthesis; L-cysteine from L-serine: step 2/2. The sequence is that of Cysteine synthase (cysK) from Staphylococcus epidermidis (strain ATCC 35984 / DSM 28319 / BCRC 17069 / CCUG 31568 / BM 3577 / RP62A).